The chain runs to 177 residues: F(420)H(2) dehydrogenase subunit I (177 aa).

Positions 1-21 (MGCPEVQDRPGSGYELEETPA) are disordered. 4Fe-4S ferredoxin-type domains are found at residues 76-105 (GLQT…IVKA) and 116-145 (WFPQ…SGKE). The [4Fe-4S] cluster site is built by Cys85, Cys88, Cys91, Cys95, Cys125, Cys128, Cys131, and Cys135.

Belongs to the complex I 23 kDa subunit family. As to quaternary structure, the FPO complex is composed of at least 13 different subunits. Requires [4Fe-4S] cluster as cofactor.

It catalyses the reaction methanophenazine + reduced coenzyme F420-(gamma-L-Glu)(n) = dihydromethanophenazine + oxidized coenzyme F420-(gamma-L-Glu)(n) + H(+). Functionally, component of the F(420)H(2) dehydrogenase (FPO complex) which is part of the energy-conserving F(420)H(2):heterodisulfide oxidoreductase system. The membrane-bound electron transfer system of the complex plays an important role in the metabolism of methylotrophic methanogens when the organisms grow on methanol or methylamines. Catalyzes the oxidation of methanophenazine to dihydromethanophenazine. It shuttles electrons from F(420)H(2), via FAD and iron-sulfur (Fe-S) centers, to methanophenazine (an electron carrier in the membrane). It couples the redox reaction to proton translocation (for every two electrons transferred, two hydrogen ions are translocated across the cytoplasmic membrane), and thus conserves the redox energy in a proton gradient. It also catalyzes the oxidation of F(420)H(2) with quinones such as 2,3-dimethyl-1,4-naphthoquinone, 2-methyl-1,4-naphthoquinone and tetramethyl-p-benzoquinone. The protein is F(420)H(2) dehydrogenase subunit I (fpoI) of Methanosarcina mazei (strain ATCC BAA-159 / DSM 3647 / Goe1 / Go1 / JCM 11833 / OCM 88) (Methanosarcina frisia).